Reading from the N-terminus, the 272-residue chain is uncharacterized protein (272 aa).

This is an uncharacterized protein from Sinorhizobium fredii (strain NBRC 101917 / NGR234).